The chain runs to 436 residues: Trigger factor (436 aa).

The region spanning 163–248 (TDRVIIDFAG…VKNVAEAILP (86 aa)) is the PPIase FKBP-type domain.

Belongs to the FKBP-type PPIase family. Tig subfamily.

The protein localises to the cytoplasm. The enzyme catalyses [protein]-peptidylproline (omega=180) = [protein]-peptidylproline (omega=0). In terms of biological role, involved in protein export. Acts as a chaperone by maintaining the newly synthesized protein in an open conformation. Functions as a peptidyl-prolyl cis-trans isomerase. This chain is Trigger factor, found in Laribacter hongkongensis (strain HLHK9).